Reading from the N-terminus, the 375-residue chain is Queuine tRNA-ribosyltransferase (375 aa).

Aspartate 89 (proton acceptor) is an active-site residue. Substrate contacts are provided by residues 89-93, aspartate 143, glutamine 187, and glycine 214; that span reads DSGGF. The tract at residues 245–251 is RNA binding; the sequence is GVGKPED. The active-site Nucleophile is the aspartate 264. An RNA binding; important for wobble base 34 recognition region spans residues 269 to 273; that stretch reads TRNAR. The Zn(2+) site is built by cysteine 302, cysteine 304, cysteine 307, and histidine 333.

Belongs to the queuine tRNA-ribosyltransferase family. Homodimer. Within each dimer, one monomer is responsible for RNA recognition and catalysis, while the other monomer binds to the replacement base PreQ1. Zn(2+) is required as a cofactor.

The catalysed reaction is 7-aminomethyl-7-carbaguanine + guanosine(34) in tRNA = 7-aminomethyl-7-carbaguanosine(34) in tRNA + guanine. It participates in tRNA modification; tRNA-queuosine biosynthesis. Its function is as follows. Catalyzes the base-exchange of a guanine (G) residue with the queuine precursor 7-aminomethyl-7-deazaguanine (PreQ1) at position 34 (anticodon wobble position) in tRNAs with GU(N) anticodons (tRNA-Asp, -Asn, -His and -Tyr). Catalysis occurs through a double-displacement mechanism. The nucleophile active site attacks the C1' of nucleotide 34 to detach the guanine base from the RNA, forming a covalent enzyme-RNA intermediate. The proton acceptor active site deprotonates the incoming PreQ1, allowing a nucleophilic attack on the C1' of the ribose to form the product. After dissociation, two additional enzymatic reactions on the tRNA convert PreQ1 to queuine (Q), resulting in the hypermodified nucleoside queuosine (7-(((4,5-cis-dihydroxy-2-cyclopenten-1-yl)amino)methyl)-7-deazaguanosine). The sequence is that of Queuine tRNA-ribosyltransferase from Enterobacter sp. (strain 638).